Here is a 356-residue protein sequence, read N- to C-terminus: Holliday junction branch migration complex subunit RuvB (356 aa).

Residues 4–191 form a large ATPase domain (RuvB-L) region; sequence TDKLATEQRI…FGIVARLEFY (188 aa). ATP contacts are provided by residues leucine 30, arginine 31, glycine 72, lysine 75, threonine 76, threonine 77, 138 to 140, arginine 181, tyrosine 191, and arginine 228; that span reads EDY. Threonine 76 is a binding site for Mg(2+). A small ATPAse domain (RuvB-S) region spans residues 192 to 262; the sequence is DADQLSRIVR…VADAALAMLD (71 aa). The segment at 265–356 is head domain (RuvB-H); that stretch reads PVGFDLMDRK…RDEWDTPDGK (92 aa). 3 residues coordinate DNA: arginine 301, arginine 320, and arginine 325.

This sequence belongs to the RuvB family. Homohexamer. Forms an RuvA(8)-RuvB(12)-Holliday junction (HJ) complex. HJ DNA is sandwiched between 2 RuvA tetramers; dsDNA enters through RuvA and exits via RuvB. An RuvB hexamer assembles on each DNA strand where it exits the tetramer. Each RuvB hexamer is contacted by two RuvA subunits (via domain III) on 2 adjacent RuvB subunits; this complex drives branch migration. In the full resolvosome a probable DNA-RuvA(4)-RuvB(12)-RuvC(2) complex forms which resolves the HJ.

The protein localises to the cytoplasm. It catalyses the reaction ATP + H2O = ADP + phosphate + H(+). Functionally, the RuvA-RuvB-RuvC complex processes Holliday junction (HJ) DNA during genetic recombination and DNA repair, while the RuvA-RuvB complex plays an important role in the rescue of blocked DNA replication forks via replication fork reversal (RFR). RuvA specifically binds to HJ cruciform DNA, conferring on it an open structure. The RuvB hexamer acts as an ATP-dependent pump, pulling dsDNA into and through the RuvAB complex. RuvB forms 2 homohexamers on either side of HJ DNA bound by 1 or 2 RuvA tetramers; 4 subunits per hexamer contact DNA at a time. Coordinated motions by a converter formed by DNA-disengaged RuvB subunits stimulates ATP hydrolysis and nucleotide exchange. Immobilization of the converter enables RuvB to convert the ATP-contained energy into a lever motion, pulling 2 nucleotides of DNA out of the RuvA tetramer per ATP hydrolyzed, thus driving DNA branch migration. The RuvB motors rotate together with the DNA substrate, which together with the progressing nucleotide cycle form the mechanistic basis for DNA recombination by continuous HJ branch migration. Branch migration allows RuvC to scan DNA until it finds its consensus sequence, where it cleaves and resolves cruciform DNA. This chain is Holliday junction branch migration complex subunit RuvB, found in Burkholderia cenocepacia (strain ATCC BAA-245 / DSM 16553 / LMG 16656 / NCTC 13227 / J2315 / CF5610) (Burkholderia cepacia (strain J2315)).